A 190-amino-acid polypeptide reads, in one-letter code: B3 domain-containing protein At4g01580 (190 aa).

Residues 1–25 (MVITRNMKARATSVSHRQSQQDPES) are disordered. Positions 12-23 (TSVSHRQSQQDP) are enriched in polar residues. Positions 29-122 (KFFKLVLPST…SFRVIIFNAS (94 aa)) form a DNA-binding region, TF-B3.

It localises to the nucleus. This is B3 domain-containing protein At4g01580 from Arabidopsis thaliana (Mouse-ear cress).